The primary structure comprises 519 residues: Laccase-2 (519 aa).

A signal peptide spans 1–20; that stretch reads MGLQRFSFFVTLALVARSLA. Plastocyanin-like domains are found at residues 22 to 147 and 159 to 301; these read IGPV…FVVY and VDNE…ILRY. The N-linked (GlcNAc...) asparagine glycan is linked to Asn74. Residues His84, His86, His129, and His131 each coordinate Cu cation. Cystine bridges form between Cys105–Cys508 and Cys137–Cys225. Residues Asn161, Asn228, Asn237, Asn271, Asn353, and Asn361 are each glycosylated (N-linked (GlcNAc...) asparagine). The Plastocyanin-like 3 domain maps to 368-490; sequence TVPVLLQILS…AGFAIVFAED (123 aa). Residues His415, His418, and His420 each contribute to the Cu cation site. A glycan (N-linked (GlcNAc...) asparagine) is linked at Asn456. Cu cation contacts are provided by His472, Cys473, His474, and His478.

Belongs to the multicopper oxidase family. It depends on Cu cation as a cofactor.

It is found in the secreted. It catalyses the reaction 4 hydroquinone + O2 = 4 benzosemiquinone + 2 H2O. Its function is as follows. Lignin degradation and detoxification of lignin-derived products. The polypeptide is Laccase-2 (LCC2) (Trametes versicolor (White-rot fungus)).